Consider the following 1396-residue polypeptide: DNA ligase 6 (1396 aa).

2 disordered regions span residues 441–464 and 562–599; these read KNACEDGGENVPSSRGPILHDTTP and MNLTKGTISPGKRGKSSGSKSNKKAKKDPKSKPVGPGQ. Short sequence motifs (nuclear localization signal) lie at residues 572-579 and 886-893; these read GKRGKSSG and LRKISVQT. ATP is bound at residue E1037. K1039 acts as the N6-AMP-lysine intermediate in catalysis. ATP is bound by residues R1044, R1060, E1092, and F1136. Position 1092 (E1092) interacts with Mg(2+). Mg(2+) is bound at residue E1207. ATP is bound by residues K1212, R1225, and K1231.

It belongs to the ATP-dependent DNA ligase family. Requires Mg(2+) as cofactor. In terms of tissue distribution, mostly expressed in buds and flowers, and, to a lower extent, in stems, leaves, siliques and seeds.

It localises to the nucleus. It carries out the reaction ATP + (deoxyribonucleotide)n-3'-hydroxyl + 5'-phospho-(deoxyribonucleotide)m = (deoxyribonucleotide)n+m + AMP + diphosphate.. Functionally, DNA ligase that seals nicks in double-stranded DNA during DNA replication, DNA recombination and DNA repair. Required to maintain seed viability (e.g. longevity and storability) and during seed germination, probably by repairing DNA damage accumulated during seed development, storage and/or imbibition. Facilitates seed germination in cold conditions (2 degrees Celsius) and under oxidative stress (e.g. menadione, a genotoxic agent). Involved in repair of X-ray-induced damage. Limits stable root transformation by A.tumefaciens T-DNA. The polypeptide is DNA ligase 6 (Arabidopsis thaliana (Mouse-ear cress)).